A 340-amino-acid chain; its full sequence is Sodium/bile acid cotransporter 7 (340 aa).

The Cytoplasmic portion of the chain corresponds to 1 to 10 (MRLLERVRKE). Residues 11–31 (WFMVGIVVAIGAAKLEPSVGV) traverse the membrane as a helical segment. Residues 32 to 37 (NGGPLK) lie on the Extracellular side of the membrane. The helical transmembrane segment at 38 to 58 (PEITVSYIAVATIFFNSGLSL) threads the bilayer. The Cytoplasmic segment spans residues 59-71 (KTEELTSALVHLK). A helical membrane pass occupies residues 72–92 (LHLFIQVFTLAFFPTTIWLFL). Over 93–116 (QLLSVTSINEWLLKGLQTVGCMPP) the chain is Extracellular. Residues 117–137 (PVSSAVILTKAVGGNEAAAIF) traverse the membrane as a helical segment. Position 138 (N138) is a topological domain, cytoplasmic. The helical transmembrane segment at 139–159 (SAFGSFLGIVVTPVLLLLFLG) threads the bilayer. At 160 to 163 (SSSS) the chain is on the extracellular side. The chain crosses the membrane as a helical span at residues 164 to 184 (VPFTSIFSQLFMTVVVPLVIG). Residues 185-201 (QIVRRYIKDWLERKKPP) lie on the Cytoplasmic side of the membrane. The helical transmembrane segment at 202–222 (FGVVSSSVLLMIIYTTFCDTF) threads the bilayer. The Extracellular portion of the chain corresponds to 223–234 (SNPNIDLDKFSL). The chain crosses the membrane as a helical span at residues 235–255 (ILILFIIVSIQLSFMLLTFVF). The Cytoplasmic segment spans residues 256–270 (STRNNSGFTPADTVA). Residues 271–291 (IIFCSTHKSLTLGIPMLKIVF) traverse the membrane as a helical segment. Topologically, residues 292–298 (AGHEHLS) are extracellular. The helical transmembrane segment at 299-319 (LISLPLLIYHPAQILLGSVLV) threads the bilayer. At 320 to 340 (PTIKSWMVSRQKGVKLTRPTV) the chain is on the cytoplasmic side.

It belongs to the bile acid:sodium symporter (BASS) (TC 2.A.28) family. As to expression, strongly expressed in liver, adrenal gland, small intestine and colon. Moderately expressed in heart, lung, kidney and spleen. Weakly expressed in brain.

The protein resides in the cell membrane. It is found in the endoplasmic reticulum membrane. Its subcellular location is the golgi apparatus membrane. Its function is as follows. Involved in teeth and skeletal development. Has an essential role in the biosynthesis and trafficking of glycosaminoglycans and glycoproteins to produce a proper functioning extracellular matrix. Required for extracellular matrix mineralization. Also involved in the regulation of cellular calcium homeostasis. Does not show transport activity towards bile acids or steroid sulfates (including taurocholate, cholate, chenodeoxycholate, estrone-3-sulfate, dehydroepiandrosterone sulfate (DHEAS) and pregnenolone sulfate). The protein is Sodium/bile acid cotransporter 7 (Slc10a7) of Rattus norvegicus (Rat).